A 141-amino-acid chain; its full sequence is Hemoglobin subunit alpha (141 aa).

One can recognise a Globin domain in the interval 1–141; it reads VLSPADKTNI…VSTVLTSKYR (141 aa). S3 is subject to Phosphoserine. At K7 the chain carries N6-succinyllysine. Residue T8 is modified to Phosphothreonine. K11 is subject to N6-succinyllysine. K16 bears the N6-acetyllysine; alternate mark. K16 carries the post-translational modification N6-succinyllysine; alternate. Y24 bears the Phosphotyrosine mark. Phosphoserine is present on S35. At K40 the chain carries N6-succinyllysine. Position 49 is a phosphoserine (S49). Residue H58 coordinates O2. Residue H87 coordinates heme b. The residue at position 102 (S102) is a Phosphoserine. The residue at position 108 (T108) is a Phosphothreonine. S124 is modified (phosphoserine). A phosphothreonine mark is found at T134 and T137. The residue at position 138 (S138) is a Phosphoserine.

Belongs to the globin family. As to quaternary structure, heterotetramer of two alpha chains and two beta chains. Red blood cells.

Involved in oxygen transport from the lung to the various peripheral tissues. Its function is as follows. Hemopressin acts as an antagonist peptide of the cannabinoid receptor CNR1. Hemopressin-binding efficiently blocks cannabinoid receptor CNR1 and subsequent signaling. This chain is Hemoglobin subunit alpha (HBA), found in Canis lupus familiaris (Dog).